Here is a 123-residue protein sequence, read N- to C-terminus: Large ribosomal subunit protein bL12 (123 aa).

Belongs to the bacterial ribosomal protein bL12 family. Homodimer. Part of the ribosomal stalk of the 50S ribosomal subunit. Forms a multimeric L10(L12)X complex, where L10 forms an elongated spine to which 2 to 4 L12 dimers bind in a sequential fashion. Binds GTP-bound translation factors.

Functionally, forms part of the ribosomal stalk which helps the ribosome interact with GTP-bound translation factors. Is thus essential for accurate translation. This Bartonella bacilliformis (strain ATCC 35685 / KC583 / Herrer 020/F12,63) protein is Large ribosomal subunit protein bL12.